A 468-amino-acid polypeptide reads, in one-letter code: ATP synthase subunit beta (468 aa).

G156 to T163 is an ATP binding site.

Belongs to the ATPase alpha/beta chains family. As to quaternary structure, F-type ATPases have 2 components, CF(1) - the catalytic core - and CF(0) - the membrane proton channel. CF(1) has five subunits: alpha(3), beta(3), gamma(1), delta(1), epsilon(1). CF(0) has three main subunits: a(1), b(2) and c(9-12). The alpha and beta chains form an alternating ring which encloses part of the gamma chain. CF(1) is attached to CF(0) by a central stalk formed by the gamma and epsilon chains, while a peripheral stalk is formed by the delta and b chains.

The protein resides in the cell inner membrane. It catalyses the reaction ATP + H2O + 4 H(+)(in) = ADP + phosphate + 5 H(+)(out). Functionally, produces ATP from ADP in the presence of a proton gradient across the membrane. The catalytic sites are hosted primarily by the beta subunits. This Sulfurimonas denitrificans (strain ATCC 33889 / DSM 1251) (Thiomicrospira denitrificans (strain ATCC 33889 / DSM 1251)) protein is ATP synthase subunit beta.